A 533-amino-acid chain; its full sequence is Putative phosphate permease HP_1491 (533 aa).

A run of 12 helical transmembrane segments spans residues 23-43 (IALA…FGQA), 47-67 (GLLL…IGAN), 81-101 (AISM…GAII), 129-149 (VMLA…LIGA), 156-176 (SVVG…AVNW), 182-202 (IVAS…FFLM), 221-241 (VVPY…IVKV), 248-268 (LNFE…FILF), 286-306 (INEL…FAHG), 338-358 (VPLW…SLYG), 372-392 (LDKM…LLAS), and 509-529 (LVTV…LGFI).

This sequence belongs to the inorganic phosphate transporter (PiT) (TC 2.A.20) family.

It is found in the cell membrane. Its function is as follows. Potential transporter for phosphate. This is Putative phosphate permease HP_1491 from Helicobacter pylori (strain ATCC 700392 / 26695) (Campylobacter pylori).